The primary structure comprises 415 residues: MGSSTDHGGAGGRGKKGSGSQLWKKALLHSSLCFVMGFFTGFAPSSVSDWTSAAVSAGGVGSSHVVRSLHATGGAAVNRSLLAQAAAGAVDAGPQPLLVVVTTTESTPSAAGQRAAALTRMAHTLRLVPPPLLWVVVEANPDVAATARLLRTTGLMYRHLTYKDNFTVADAAAGKERHHQRNVALGHIEHHRLAGVVLFAGLGDTFDLRFFDQLRQIRTFGAWPVATMSQNERKVVVQGPACSSSSVAGWFSMDLSNATSPVAVGGAGYGAAAARPRELDVHGFAFNSSVLWDPERWGRYPTSEPDKSQDSVKFVQQVVLEDYSKVRGIPSDCSEVMAKLRTVSQQLEATWRSALAIINELLRACASVHGHVRSKLDSLYRSDFPQTEPETLICLIHDHASHYIYGGRFLSGDFC.

Topologically, residues 1–25 (MGSSTDHGGAGGRGKKGSGSQLWKK) are cytoplasmic. Residues 26-43 (ALLHSSLCFVMGFFTGFA) form a helical; Signal-anchor for type II membrane protein membrane-spanning segment. The Lumenal segment spans residues 44-415 (PSSVSDWTSA…GGRFLSGDFC (372 aa)). Residues Asn78, Asn165, Asn257, and Asn287 are each glycosylated (N-linked (GlcNAc...) asparagine).

Belongs to the glycosyltransferase 43 family.

The protein localises to the golgi apparatus membrane. Functionally, involved in the synthesis of glucuronoxylan hemicellulose in secondary cell walls. The polypeptide is Probable glucuronosyltransferase Os03g0287800 (Oryza sativa subsp. japonica (Rice)).